The primary structure comprises 921 residues: Phototropin-1B (921 aa).

Positions 1–11 (MASKGTEGGHG) are enriched in gly residues. 2 disordered regions span residues 1–59 (MASK…SPFL) and 88–118 (TGLP…QSAA). Positions 40–51 (SSASSFRTAAAA) are enriched in low complexity. Positions 97–117 (RPSSGSARTSSEDNPQQQQSA) are enriched in polar residues. Residues 123–197 (VSEELRAALS…KIRQSLANGS (75 aa)) form the PAS 1 domain. FMN is bound by residues 172–177 (NCRFLQ), Arg190, Asn205, Asn215, and Gln236. Cys173 is subject to S-4a-FMN cysteine. The 55-residue stretch at 197–251 (SNYCGRILNYKKDGTPFWNLLTIAPIKDEDGRLLKFIGMQVEVSKYTEGKKDTVV) folds into the PAC 1 domain. The segment covering 286-295 (RSLSESSNNT) has biased composition (polar residues). Disordered regions lie at residues 286–345 (RSLS…QVNR) and 366–391 (EKNM…SFED). Basic and acidic residues-rich tracts occupy residues 312-321 (PSKRSSESGS) and 366-376 (EKNMLKPRDED). Positions 400–473 (RGIDLATTLE…RKIRDAIDNQ (74 aa)) constitute a PAS 2 domain. FMN-binding positions include 449–454 (NCRFLQ), Arg467, Asn482, Asn492, and Gln513. Cys450 carries the post-translational modification S-4a-FMN cysteine. Residues 474–528 (AEVTVQLINYTKSGKKFWNLFHLQPMRDQKGDVQYFIGVQLDGTEHVQDDAAKEG) enclose the PAC 2 domain. The 288-residue stretch at 594–881 (FRPVKPLGSG…ANEIKGHPFF (288 aa)) folds into the Protein kinase domain. ATP-binding positions include 600–608 (LGSGDTGSV) and Lys623. Residue Asp719 is the Proton acceptor of the active site.

This sequence belongs to the protein kinase superfamily. Ser/Thr protein kinase family. Homodimer. The cofactor is FMN. Autophosphorylated in response to blue light irradiation. In terms of processing, 2 molecules of FMN bind covalently to cysteines after exposure to blue light and are reversed in the dark.

It catalyses the reaction L-seryl-[protein] + ATP = O-phospho-L-seryl-[protein] + ADP + H(+). It carries out the reaction L-threonyl-[protein] + ATP = O-phospho-L-threonyl-[protein] + ADP + H(+). Protein kinase that acts as a blue light photoreceptor in a signal-transduction pathway for phototropic responses. Regulates a wide range of physiological activities in plants that maximize the efficiency of photosynthesis, such as chloroplast relocations, stomata opening, and leaf expansion. This is Phototropin-1B (PHOT1B) from Oryza sativa subsp. japonica (Rice).